The chain runs to 149 residues: Nascent polypeptide-associated complex subunit beta-2 (149 aa).

Positions 38 to 103 constitute an NAC-A/B domain; the sequence is DKDNTKLQAE…PKENTLNGLY (66 aa).

Belongs to the NAC-beta family. Part of the nascent polypeptide-associated complex (NAC), consisting of EGD2 and either EGD1 or BTT1. NAC associates with ribosomes via EGD1 or BTT1.

It is found in the cytoplasm. Its subcellular location is the nucleus. Its function is as follows. Acts as a component of the nascent polypeptide-associated complex (NAC), which promotes mitochondrial protein import by enhancing productive ribosome interactions with the outer mitochondrial membrane. Also blocks the inappropriate interaction of ribosomes translating non-secretory nascent polypeptides with translocation sites in the membrane of the endoplasmic reticulum. BTT1 may act as a transcription factor that exert a negative effect on the expression of several genes that are transcribed by RNA polymerase II. This Saccharomyces cerevisiae (strain ATCC 204508 / S288c) (Baker's yeast) protein is Nascent polypeptide-associated complex subunit beta-2 (BTT1).